Consider the following 335-residue polypeptide: Tetraacyldisaccharide 4'-kinase (335 aa).

58–65 serves as a coordination point for ATP; the sequence is TVGGSGKT.

The protein belongs to the LpxK family.

The enzyme catalyses a lipid A disaccharide + ATP = a lipid IVA + ADP + H(+). It functions in the pathway glycolipid biosynthesis; lipid IV(A) biosynthesis; lipid IV(A) from (3R)-3-hydroxytetradecanoyl-[acyl-carrier-protein] and UDP-N-acetyl-alpha-D-glucosamine: step 6/6. In terms of biological role, transfers the gamma-phosphate of ATP to the 4'-position of a tetraacyldisaccharide 1-phosphate intermediate (termed DS-1-P) to form tetraacyldisaccharide 1,4'-bis-phosphate (lipid IVA). This chain is Tetraacyldisaccharide 4'-kinase, found in Shewanella sp. (strain MR-4).